We begin with the raw amino-acid sequence, 172 residues long: HAD-like hydrolase superfamily protein P8B7.31 (172 aa).

Asp14 (nucleophile) is an active-site residue. 3 residues coordinate Mg(2+): Asp14, Asp16, and Asp137. The active-site Proton donor is the Asp16.

This sequence belongs to the HAD-like hydrolase superfamily.

The protein localises to the cytoplasm. The protein resides in the nucleus. The polypeptide is HAD-like hydrolase superfamily protein P8B7.31 (Schizosaccharomyces pombe (strain 972 / ATCC 24843) (Fission yeast)).